Here is a 658-residue protein sequence, read N- to C-terminus: Probable rhamnogalacturonate lyase B (658 aa).

An N-terminal signal peptide occupies residues 1 to 19 (MRFAIPLGAACAWAGVALA). N-linked (GlcNAc...) asparagine glycans are attached at residues N110, N143, N239, N280, N522, N530, N564, N571, N592, and N633.

This sequence belongs to the polysaccharide lyase 4 family.

It localises to the secreted. The enzyme catalyses Endotype eliminative cleavage of L-alpha-rhamnopyranosyl-(1-&gt;4)-alpha-D-galactopyranosyluronic acid bonds of rhamnogalacturonan I domains in ramified hairy regions of pectin leaving L-rhamnopyranose at the reducing end and 4-deoxy-4,5-unsaturated D-galactopyranosyluronic acid at the non-reducing end.. Its function is as follows. Pectinolytic enzymes consist of four classes of enzymes: pectin lyase, polygalacturonase, pectin methylesterase and rhamnogalacturonase. Degrades the rhamnogalacturonan I (RG-I) backbone of pectin. The polypeptide is Probable rhamnogalacturonate lyase B (rglB) (Neosartorya fischeri (strain ATCC 1020 / DSM 3700 / CBS 544.65 / FGSC A1164 / JCM 1740 / NRRL 181 / WB 181) (Aspergillus fischerianus)).